The chain runs to 638 residues: MAAELRMILYEDDSVQVQYVDGSTLQLSPCGSEFLFEKSPPVSAHPLEQPERIRQRTHFVISTYREQLQRALDFRNSSATCPFLSETIIPSERKKHIFIDITEVRWPSLDTDGTMIYMESGIVKITSLDGHAYLCLPRSQHEFTVHFLCKVSQKSDSSAVLSETNNKAPKDKLVEKTGKICIRGNLPGQRLKNKENEFHCQIMKSKETLKKMSCVNGTEGREELPSPGTKHTCVYTWVKQCWSVAACPEEWKYPLSLALHFHNKISNMSKIDAHITQSRFLTSDISEERGKVVSVLPRALSLSCPVPHLHRWNFCDSLLQRQSDEYSYPELVKMVWYKGVTYRLTHQNMNSIEIYSGDGSVFKSEGAYFGNYFTYYSIQEGSGKREEKTYSVNNLPPDRPGSPFTVGSLIKQATRILQHCVKMRLSLSHNYRICCWKMVPGINDSNILPLVLKESLIPSVGRFLAYSDDKVHAIFLDGITLTLNWNFSSPIEKRQVNQGLNLGWCKLTFPDGQEQLIQIEHPEPYERYVTTVTSWCRRLTQTSPREMPTHSSSSVLQENWSVASELEKIQKFNLLLENSGILNQISNKKNEQQSFDHYKPGSSETLLGEVNENRVSIALKKTSEILHDIDCLLSNSKK.

This is an uncharacterized protein from Homo sapiens (Human).